The primary structure comprises 494 residues: Probable cytosol aminopeptidase (494 aa).

2 residues coordinate Mn(2+): Lys-260 and Asp-265. Lys-272 is a catalytic residue. Positions 283, 342, and 344 each coordinate Mn(2+). Residue Arg-346 is part of the active site.

Belongs to the peptidase M17 family. Mn(2+) is required as a cofactor.

The protein resides in the cytoplasm. The enzyme catalyses Release of an N-terminal amino acid, Xaa-|-Yaa-, in which Xaa is preferably Leu, but may be other amino acids including Pro although not Arg or Lys, and Yaa may be Pro. Amino acid amides and methyl esters are also readily hydrolyzed, but rates on arylamides are exceedingly low.. The catalysed reaction is Release of an N-terminal amino acid, preferentially leucine, but not glutamic or aspartic acids.. Its function is as follows. Presumably involved in the processing and regular turnover of intracellular proteins. Catalyzes the removal of unsubstituted N-terminal amino acids from various peptides. In Bacillus cereus (strain ATCC 10987 / NRS 248), this protein is Probable cytosol aminopeptidase.